A 277-amino-acid chain; its full sequence is Probable endonuclease 4 (277 aa).

Zn(2+)-binding residues include histidine 69, histidine 109, glutamate 145, aspartate 179, histidine 182, histidine 214, aspartate 227, histidine 229, and glutamate 259.

Belongs to the AP endonuclease 2 family. Requires Zn(2+) as cofactor.

It catalyses the reaction Endonucleolytic cleavage to 5'-phosphooligonucleotide end-products.. Endonuclease IV plays a role in DNA repair. It cleaves phosphodiester bonds at apurinic or apyrimidinic (AP) sites, generating a 3'-hydroxyl group and a 5'-terminal sugar phosphate. This Bacteroides thetaiotaomicron (strain ATCC 29148 / DSM 2079 / JCM 5827 / CCUG 10774 / NCTC 10582 / VPI-5482 / E50) protein is Probable endonuclease 4.